A 1306-amino-acid chain; its full sequence is Angiotensin-converting enzyme (1306 aa).

The signal sequence occupies residues 1-28 (MGAASGRRSPPLLLPLLLLLLPPPPVIL). Over 29–1256 (ELDPALQPGN…GLNLEEQQAR (1228 aa)) the chain is Extracellular. Peptidase M2 domains follow at residues 40–624 (PADE…LGWP) and 643–1222 (VSDE…LGWP). N-linked (GlcNAc...) asparagine glycosylation is found at Asn54, Asn74, Asn111, Asn146, and Asn160. Cys157 and Cys165 form a disulfide bridge. Tyr231 provides a ligand contact to chloride. N-linked (GlcNAc...) asparagine glycosylation occurs at Asn318. Cys359 and Cys377 form a disulfide bridge. His390 contacts Zn(2+). The Proton acceptor 1 role is filled by Glu391. Zn(2+) contacts are provided by His394 and Glu418. Residues Asn445 and Asn509 are each glycosylated (N-linked (GlcNAc...) asparagine). The active-site Proton donor 1 is His520. Asn523 is a glycosylation site (N-linked (GlcNAc...) asparagine). Arg529 provides a ligand contact to chloride. An intrachain disulfide couples Cys545 to Cys557. N-linked (GlcNAc...) asparagine glycans are attached at residues Asn673, Asn695, Asn714, and Asn760. Residues Cys757 and Cys763 are joined by a disulfide bond. Residues Arg791 and Tyr829 each coordinate chloride. N-linked (GlcNAc...) asparagine glycosylation occurs at Asn942. An intrachain disulfide couples Cys957 to Cys975. His988 provides a ligand contact to Zn(2+). The Proton acceptor 2 role is filled by Glu989. Zn(2+)-binding residues include His992 and Glu1016. Chloride contacts are provided by Trp1090 and Arg1094. The active-site Proton donor 2 is the His1118. Arg1127 provides a ligand contact to chloride. An intrachain disulfide couples Cys1143 to Cys1155. Residues Asn1191 and Asn1225 are each glycosylated (N-linked (GlcNAc...) asparagine). Residues 1215 to 1256 (HGEKLGWPQYNWTPNSARLEGPFVGSGRVNFLGLNLEEQQAR) are juxtamembrane stalk. The chain crosses the membrane as a helical span at residues 1257–1277 (VGQWVLLFLGVALLVATLGLT). At 1278–1306 (QRLFSIRHHSLRRPHRGPQFGSEVELRHS) the chain is on the cytoplasmic side. Ser1299 is subject to Phosphoserine.

It belongs to the peptidase M2 family. As to quaternary structure, monomer and homodimer; homodimerizes following binding to an inhibitor. Interacts with calmodulin (CALM1, CALM2 or CALM3); interaction takes place in the cytoplasmic region and regulates phosphorylation and proteolytic cleavage. Zn(2+) is required as a cofactor. Chloride serves as cofactor. Produced following proteolytic cleavage by secretase enzymes that cleave the transmembrane form in the juxtamembrane stalk region upstream of the transmembrane region. Cleavage can take place at different sites of the juxtamembrane stalk region. Post-translationally, phosphorylated by CK2 on Ser-1299; which allows membrane retention. Phosphorylated on tyrosine residues on its extracellular part, promoting cleavage by secretase enzymes and formation of the soluble form (Angiotensin-converting enzyme, soluble form).

The protein localises to the cell membrane. It is found in the cytoplasm. Its subcellular location is the secreted. It carries out the reaction Release of a C-terminal dipeptide, oligopeptide-|-Xaa-Yaa, when Xaa is not Pro, and Yaa is neither Asp nor Glu. Thus, conversion of angiotensin I to angiotensin II, with increase in vasoconstrictor activity, but no action on angiotensin II.. It catalyses the reaction angiotensin I + H2O = L-histidyl-L-leucine + angiotensin II. The catalysed reaction is bradykinin + H2O = L-Phe-L-Arg + bradykinin(1-7). The enzyme catalyses substance P + H2O = substance P(1-9) + L-Leu-L-Met-NH2. It carries out the reaction substance P + H2O = substance P(1-8) + Gly-L-Leu-L-Met-NH2. It catalyses the reaction substance P + H2O = L-Phe-L-Phe-Gly-L-Leu-L-Met-NH2 + substance P(1-6). The catalysed reaction is neurotensin + H2O = neurotensin(1-11) + L-isoleucyl-L-leucine. The enzyme catalyses goralatide + H2O = N-acetyl-L-seryl-L-aspartate + L-lysyl-L-proline. It carries out the reaction Met-enkephalin + H2O = L-phenylalanyl-L-methionine + L-tyrosylglycylglycine. It catalyses the reaction Leu-enkephalin + H2O = L-tyrosylglycylglycine + L-phenylalanyl-L-leucine. The catalysed reaction is Met-enkephalin-Arg-Phe + H2O = L-arginyl-L-phenylalanine + Met-enkephalin. Its activity is regulated as follows. The dipeptidyl carboxypeptidase activity is strongly activated by chloride. The dipeptidyl carboxypeptidase activity is specifically inhibited by lisinopril, captopril and enalaprilat. Functionally, dipeptidyl carboxypeptidase that removes dipeptides from the C-terminus of a variety of circulating hormones, such as angiotensin I, bradykinin or enkephalins, thereby playing a key role in the regulation of blood pressure, electrolyte homeostasis or synaptic plasticity. Composed of two similar catalytic domains, each possessing a functional active site, with different selectivity for substrates. Plays a major role in the angiotensin-renin system that regulates blood pressure and sodium retention by the kidney by converting angiotensin I to angiotensin II, resulting in an increase of the vasoconstrictor activity of angiotensin. Also able to inactivate bradykinin, a potent vasodilator, and therefore enhance the blood pressure response. Acts as a regulator of synaptic transmission by mediating cleavage of neuropeptide hormones, such as substance P, neurotensin or enkephalins. Catalyzes degradation of different enkephalin neuropeptides (Met-enkephalin, Leu-enkephalin, Met-enkephalin-Arg-Phe and possibly Met-enkephalin-Arg-Gly-Leu). Acts as a regulator of synaptic plasticity in the nucleus accumbens of the brain by mediating cleavage of Met-enkephalin-Arg-Phe, a strong ligand of Mu-type opioid receptor OPRM1, into Met-enkephalin. Met-enkephalin-Arg-Phe cleavage by ACE decreases activation of OPRM1, leading to long-term synaptic potentiation of glutamate release. Also acts as a regulator of hematopoietic stem cell differentiation by mediating degradation of hemoregulatory peptide N-acetyl-SDKP (AcSDKP). Acts as a regulator of cannabinoid signaling pathway by mediating degradation of hemopressin, an antagonist peptide of the cannabinoid receptor CNR1. Involved in amyloid-beta metabolism by catalyzing degradation of Amyloid-beta protein 40 and Amyloid-beta protein 42 peptides, thereby preventing plaque formation. Catalyzes cleavage of cholecystokinin (maturation of Cholecystokinin-8 and Cholecystokinin-5) and Gonadoliberin-1 (both maturation and degradation) hormones. Degradation of hemoregulatory peptide N-acetyl-SDKP (AcSDKP) and amyloid-beta proteins is mediated by the N-terminal catalytic domain, while angiotensin I and cholecystokinin cleavage is mediated by the C-terminal catalytic region. Its function is as follows. Soluble form that is released in blood plasma and other body fluids following proteolytic cleavage in the juxtamembrane stalk region. The protein is Angiotensin-converting enzyme of Bos taurus (Bovine).